The following is a 180-amino-acid chain: Large ribosomal subunit protein uL5 (180 aa).

Belongs to the universal ribosomal protein uL5 family. Part of the 50S ribosomal subunit; part of the 5S rRNA/L5/L18/L25 subcomplex. Contacts the 5S rRNA and the P site tRNA. Forms a bridge to the 30S subunit in the 70S ribosome.

In terms of biological role, this is one of the proteins that bind and probably mediate the attachment of the 5S RNA into the large ribosomal subunit, where it forms part of the central protuberance. In the 70S ribosome it contacts protein S13 of the 30S subunit (bridge B1b), connecting the 2 subunits; this bridge is implicated in subunit movement. Contacts the P site tRNA; the 5S rRNA and some of its associated proteins might help stabilize positioning of ribosome-bound tRNAs. The protein is Large ribosomal subunit protein uL5 of Rubrobacter xylanophilus (strain DSM 9941 / JCM 11954 / NBRC 16129 / PRD-1).